The following is a 462-amino-acid chain: Chitinase 1 (462 aa).

An N-terminal signal peptide occupies residues 1–17 (MILNLIILLAISIVASA). Residues 18–291 (SNIAAYWGQN…NQLYQALSGS (274 aa)) form the GH18 domain. N-linked (GlcNAc...) asparagine glycosylation is present at asparagine 57. Glutamate 147 serves as the catalytic Proton donor.

This sequence belongs to the glycosyl hydrolase 18 family. Chitinase class III subfamily.

It is found in the secreted. It carries out the reaction Random endo-hydrolysis of N-acetyl-beta-D-glucosaminide (1-&gt;4)-beta-linkages in chitin and chitodextrins.. This chain is Chitinase 1 (CHT1), found in Candida albicans (Yeast).